The primary structure comprises 243 residues: Ribonuclease PH (243 aa).

Residues arginine 91 and 129-131 contribute to the phosphate site; that span reads GTR.

It belongs to the RNase PH family. In terms of assembly, homohexameric ring arranged as a trimer of dimers.

The enzyme catalyses tRNA(n+1) + phosphate = tRNA(n) + a ribonucleoside 5'-diphosphate. In terms of biological role, phosphorolytic 3'-5' exoribonuclease that plays an important role in tRNA 3'-end maturation. Removes nucleotide residues following the 3'-CCA terminus of tRNAs; can also add nucleotides to the ends of RNA molecules by using nucleoside diphosphates as substrates, but this may not be physiologically important. Probably plays a role in initiation of 16S rRNA degradation (leading to ribosome degradation) during starvation. The polypeptide is Ribonuclease PH (Burkholderia mallei (strain NCTC 10247)).